Consider the following 212-residue polypeptide: Ribosomal RNA small subunit methyltransferase G (212 aa).

S-adenosyl-L-methionine is bound by residues G80, L85, 131–132 (AE), and R146.

The protein belongs to the methyltransferase superfamily. RNA methyltransferase RsmG family.

It is found in the cytoplasm. It catalyses the reaction guanosine(527) in 16S rRNA + S-adenosyl-L-methionine = N(7)-methylguanosine(527) in 16S rRNA + S-adenosyl-L-homocysteine. Specifically methylates the N7 position of guanine in position 527 of 16S rRNA. The polypeptide is Ribosomal RNA small subunit methyltransferase G (Stenotrophomonas maltophilia (strain R551-3)).